The primary structure comprises 165 residues: Large ribosomal subunit protein uL10 (165 aa).

Belongs to the universal ribosomal protein uL10 family. In terms of assembly, part of the ribosomal stalk of the 50S ribosomal subunit. The N-terminus interacts with L11 and the large rRNA to form the base of the stalk. The C-terminus forms an elongated spine to which L12 dimers bind in a sequential fashion forming a multimeric L10(L12)X complex.

In terms of biological role, forms part of the ribosomal stalk, playing a central role in the interaction of the ribosome with GTP-bound translation factors. The chain is Large ribosomal subunit protein uL10 from Edwardsiella ictaluri (strain 93-146).